A 358-amino-acid polypeptide reads, in one-letter code: Peptide chain release factor 1 (358 aa).

N5-methylglutamine is present on Q235.

Belongs to the prokaryotic/mitochondrial release factor family. Post-translationally, methylated by PrmC. Methylation increases the termination efficiency of RF1.

It localises to the cytoplasm. Functionally, peptide chain release factor 1 directs the termination of translation in response to the peptide chain termination codons UAG and UAA. The polypeptide is Peptide chain release factor 1 (Brachyspira hyodysenteriae (strain ATCC 49526 / WA1)).